Reading from the N-terminus, the 279-residue chain is Tryptophan synthase alpha chain (279 aa).

Residues Glu50 and Asp61 each act as proton acceptor in the active site.

This sequence belongs to the TrpA family. Tetramer of two alpha and two beta chains.

The enzyme catalyses (1S,2R)-1-C-(indol-3-yl)glycerol 3-phosphate + L-serine = D-glyceraldehyde 3-phosphate + L-tryptophan + H2O. The protein operates within amino-acid biosynthesis; L-tryptophan biosynthesis; L-tryptophan from chorismate: step 5/5. Functionally, the alpha subunit is responsible for the aldol cleavage of indoleglycerol phosphate to indole and glyceraldehyde 3-phosphate. In Rhizobium rhizogenes (strain K84 / ATCC BAA-868) (Agrobacterium radiobacter), this protein is Tryptophan synthase alpha chain.